The chain runs to 130 residues: Small ribosomal subunit protein uS9 (130 aa).

The protein belongs to the universal ribosomal protein uS9 family.

In Buchnera aphidicola subsp. Acyrthosiphon pisum (strain Tuc7), this protein is Small ribosomal subunit protein uS9.